Consider the following 464-residue polypeptide: tRNA-2-methylthio-N(6)-dimethylallyladenosine synthase (464 aa).

In terms of domain architecture, MTTase N-terminal spans 19–135; it reads GSYWITTFGC…LENLLGKVDL (117 aa). Residues C28, C64, C98, C170, C174, and C177 each coordinate [4Fe-4S] cluster. One can recognise a Radical SAM core domain in the interval 156–393; sequence RESSICGWVN…NELVETTSKQ (238 aa). Positions 396 to 464 constitute a TRAM domain; sequence ERYLDSIESV…PFSLTGILCL (69 aa).

This sequence belongs to the methylthiotransferase family. MiaB subfamily. As to quaternary structure, monomer. It depends on [4Fe-4S] cluster as a cofactor.

The protein localises to the cytoplasm. It carries out the reaction N(6)-dimethylallyladenosine(37) in tRNA + (sulfur carrier)-SH + AH2 + 2 S-adenosyl-L-methionine = 2-methylsulfanyl-N(6)-dimethylallyladenosine(37) in tRNA + (sulfur carrier)-H + 5'-deoxyadenosine + L-methionine + A + S-adenosyl-L-homocysteine + 2 H(+). Functionally, catalyzes the methylthiolation of N6-(dimethylallyl)adenosine (i(6)A), leading to the formation of 2-methylthio-N6-(dimethylallyl)adenosine (ms(2)i(6)A) at position 37 in tRNAs that read codons beginning with uridine. The protein is tRNA-2-methylthio-N(6)-dimethylallyladenosine synthase of Prochlorococcus marinus (strain MIT 9215).